The sequence spans 309 residues: Aspartate carbamoyltransferase catalytic subunit (309 aa).

Carbamoyl phosphate contacts are provided by arginine 55 and threonine 56. L-aspartate is bound at residue lysine 85. Carbamoyl phosphate is bound by residues arginine 106, histidine 135, and glutamine 138. L-aspartate is bound by residues arginine 168 and arginine 230. 2 residues coordinate carbamoyl phosphate: leucine 268 and proline 269.

It belongs to the aspartate/ornithine carbamoyltransferase superfamily. ATCase family. Heterododecamer (2C3:3R2) of six catalytic PyrB chains organized as two trimers (C3), and six regulatory PyrI chains organized as three dimers (R2).

The enzyme catalyses carbamoyl phosphate + L-aspartate = N-carbamoyl-L-aspartate + phosphate + H(+). It functions in the pathway pyrimidine metabolism; UMP biosynthesis via de novo pathway; (S)-dihydroorotate from bicarbonate: step 2/3. Its function is as follows. Catalyzes the condensation of carbamoyl phosphate and aspartate to form carbamoyl aspartate and inorganic phosphate, the committed step in the de novo pyrimidine nucleotide biosynthesis pathway. The chain is Aspartate carbamoyltransferase catalytic subunit from Vibrio cholerae serotype O1 (strain ATCC 39315 / El Tor Inaba N16961).